Reading from the N-terminus, the 594-residue chain is Proline--tRNA ligase (594 aa).

It belongs to the class-II aminoacyl-tRNA synthetase family. ProS type 1 subfamily. As to quaternary structure, homodimer.

It localises to the cytoplasm. The catalysed reaction is tRNA(Pro) + L-proline + ATP = L-prolyl-tRNA(Pro) + AMP + diphosphate. In terms of biological role, catalyzes the attachment of proline to tRNA(Pro) in a two-step reaction: proline is first activated by ATP to form Pro-AMP and then transferred to the acceptor end of tRNA(Pro). As ProRS can inadvertently accommodate and process non-cognate amino acids such as alanine and cysteine, to avoid such errors it has two additional distinct editing activities against alanine. One activity is designated as 'pretransfer' editing and involves the tRNA(Pro)-independent hydrolysis of activated Ala-AMP. The other activity is designated 'posttransfer' editing and involves deacylation of mischarged Ala-tRNA(Pro). The misacylated Cys-tRNA(Pro) is not edited by ProRS. The polypeptide is Proline--tRNA ligase (Synechococcus sp. (strain WH7803)).